Consider the following 75-residue polypeptide: U9-theraphotoxin-Cg1a (75 aa).

A signal peptide spans 1 to 21 (MKTLVLFIIFGLAALFLLSSA). Residues 22–29 (NELEETER) constitute a propeptide that is removed on maturation. Disulfide bonds link C31–C46, C38–C51, and C45–C58.

The protein belongs to the neurotoxin 10 (Hwtx-1) family. 43 (Jztx-49) subfamily. In terms of tissue distribution, expressed by the venom gland.

It is found in the secreted. Probable ion channel inhibitor. The polypeptide is U9-theraphotoxin-Cg1a (Chilobrachys guangxiensis (Chinese earth tiger tarantula)).